The primary structure comprises 655 residues: Very long-chain specific acyl-CoA dehydrogenase, mitochondrial (655 aa).

A mitochondrion-targeting transit peptide spans Met-1–Tyr-40. The catalytic stretch occupies residues Ala-41–Lys-482. N6-acetyllysine is present on Lys-51. Position 71 is an N6-acetyllysine; alternate (Lys-71). An N6-succinyllysine; alternate modification is found at Lys-71. An N6-succinyllysine modification is found at Lys-195. Phe-214–Ser-223 provides a ligand contact to FAD. Cys-237 carries the post-translational modification S-nitrosocysteine. The residue at position 239 (Lys-239) is an N6-acetyllysine; alternate. Lys-239 is subject to N6-succinyllysine; alternate. Trp-249–Ser-251 lines the FAD pocket. Lys-276 and Lys-278 each carry N6-acetyllysine; alternate. Residues Lys-276 and Lys-278 each carry the N6-succinyllysine; alternate modification. An N6-acetyllysine modification is found at Lys-298. Lys-331 carries the post-translational modification N6-acetyllysine; alternate. Lys-331 is subject to N6-succinyllysine; alternate. Residue Lys-372 is modified to N6-succinyllysine. Phe-461 to Gly-463 contacts substrate. The active-site Proton acceptor is the Glu-462. Position 464–466 (Thr-464–Asp-466) interacts with FAD. Lys-482 is subject to N6-acetyllysine; alternate. Lys-482 carries the post-translational modification N6-succinyllysine; alternate. A membrane-anchoring region spans residues Glu-483–Gly-516. Phosphoserine occurs at positions 517 and 522. Position 550 is an N6-acetyllysine (Lys-550). Lys-556 is modified (N6-acetyllysine; alternate). Lys-556 is modified (N6-succinyllysine; alternate). Residue Gln-562 participates in FAD binding. Lys-639 bears the N6-succinyllysine mark.

Belongs to the acyl-CoA dehydrogenase family. Homodimer. Homodimerizes after import into the mitochondrion. FAD is required as a cofactor. S-nitrosylation at Cys-237 in liver improves catalytic efficiency.

It localises to the mitochondrion inner membrane. It catalyses the reaction a very-long-chain 2,3-saturated fatty acyl-CoA + oxidized [electron-transfer flavoprotein] + H(+) = a very-long-chain (2E)-enoyl-CoA + reduced [electron-transfer flavoprotein]. The catalysed reaction is dodecanoyl-CoA + oxidized [electron-transfer flavoprotein] + H(+) = (2E)-dodecenoyl-CoA + reduced [electron-transfer flavoprotein]. It carries out the reaction tetradecanoyl-CoA + oxidized [electron-transfer flavoprotein] + H(+) = (2E)-tetradecenoyl-CoA + reduced [electron-transfer flavoprotein]. The enzyme catalyses oxidized [electron-transfer flavoprotein] + hexadecanoyl-CoA + H(+) = (2E)-hexadecenoyl-CoA + reduced [electron-transfer flavoprotein]. It catalyses the reaction octadecanoyl-CoA + oxidized [electron-transfer flavoprotein] + H(+) = (2E)-octadecenoyl-CoA + reduced [electron-transfer flavoprotein]. The catalysed reaction is eicosanoyl-CoA + oxidized [electron-transfer flavoprotein] + H(+) = (2E)-eicosenoyl-CoA + reduced [electron-transfer flavoprotein]. It carries out the reaction docosanoyl-CoA + oxidized [electron-transfer flavoprotein] + H(+) = (2E)-docosenoyl-CoA + reduced [electron-transfer flavoprotein]. The enzyme catalyses tetracosanoyl-CoA + oxidized [electron-transfer flavoprotein] + H(+) = (2E)-tetracosenoyl-CoA + reduced [electron-transfer flavoprotein]. It participates in lipid metabolism; mitochondrial fatty acid beta-oxidation. In terms of biological role, very long-chain specific acyl-CoA dehydrogenase is one of the acyl-CoA dehydrogenases that catalyze the first step of mitochondrial fatty acid beta-oxidation, an aerobic process breaking down fatty acids into acetyl-CoA and allowing the production of energy from fats. The first step of fatty acid beta-oxidation consists in the removal of one hydrogen from C-2 and C-3 of the straight-chain fatty acyl-CoA thioester, resulting in the formation of trans-2-enoyl-CoA. Among the different mitochondrial acyl-CoA dehydrogenases, very long-chain specific acyl-CoA dehydrogenase acts specifically on acyl-CoAs with saturated 12 to 24 carbons long primary chains. This is Very long-chain specific acyl-CoA dehydrogenase, mitochondrial from Macaca fascicularis (Crab-eating macaque).